A 75-amino-acid chain; its full sequence is Peptide Ctri10036 (75 aa).

The first 22 residues, 1-22 (MNSKYLFVFLILNVIFIDLCQG), serve as a signal peptide directing secretion. A Lysine amide modification is found at Lys-41. Positions 47 to 75 (ELGSQYDYLQDFRKRELDLDDLLSKFPDY) are excised as a propeptide.

This sequence belongs to the non-disulfide-bridged peptide (NDBP) superfamily. Short antimicrobial peptide (group 4) family. Expressed by the venom gland.

The protein resides in the secreted. The protein is Peptide Ctri10036 of Chaerilus tricostatus (Scorpion).